Consider the following 147-residue polypeptide: Endoribonuclease YbeY (147 aa).

Residues His108, His112, and His118 each coordinate Zn(2+).

It belongs to the endoribonuclease YbeY family. Zn(2+) is required as a cofactor.

Its subcellular location is the cytoplasm. Functionally, single strand-specific metallo-endoribonuclease involved in late-stage 70S ribosome quality control and in maturation of the 3' terminus of the 16S rRNA. This chain is Endoribonuclease YbeY, found in Sulfurovum sp. (strain NBC37-1).